Consider the following 313-residue polypeptide: Aspartate carbamoyltransferase catalytic subunit (313 aa).

Carbamoyl phosphate is bound by residues Arg-58 and Thr-59. Residue Lys-86 coordinates L-aspartate. Carbamoyl phosphate-binding residues include Arg-108, His-136, and Gln-139. The L-aspartate site is built by Arg-169 and Arg-223. Residues Gly-264 and Pro-265 each coordinate carbamoyl phosphate.

The protein belongs to the aspartate/ornithine carbamoyltransferase superfamily. ATCase family. In terms of assembly, heterododecamer (2C3:3R2) of six catalytic PyrB chains organized as two trimers (C3), and six regulatory PyrI chains organized as three dimers (R2).

It catalyses the reaction carbamoyl phosphate + L-aspartate = N-carbamoyl-L-aspartate + phosphate + H(+). It participates in pyrimidine metabolism; UMP biosynthesis via de novo pathway; (S)-dihydroorotate from bicarbonate: step 2/3. In terms of biological role, catalyzes the condensation of carbamoyl phosphate and aspartate to form carbamoyl aspartate and inorganic phosphate, the committed step in the de novo pyrimidine nucleotide biosynthesis pathway. This Chlorobium luteolum (strain DSM 273 / BCRC 81028 / 2530) (Pelodictyon luteolum) protein is Aspartate carbamoyltransferase catalytic subunit.